The following is a 503-amino-acid chain: ATP synthase subunit alpha (503 aa).

An ATP-binding site is contributed by 170-177 (GDRKTGKT).

Belongs to the ATPase alpha/beta chains family. F-type ATPases have 2 components, CF(1) - the catalytic core - and CF(0) - the membrane proton channel. CF(1) has five subunits: alpha(3), beta(3), gamma(1), delta(1), epsilon(1). CF(0) has four main subunits: a, b, b' and c.

It is found in the cellular thylakoid membrane. It carries out the reaction ATP + H2O + 4 H(+)(in) = ADP + phosphate + 5 H(+)(out). In terms of biological role, produces ATP from ADP in the presence of a proton gradient across the membrane. The alpha chain is a regulatory subunit. The sequence is that of ATP synthase subunit alpha from Rippkaea orientalis (strain PCC 8801 / RF-1) (Cyanothece sp. (strain PCC 8801)).